Here is a 427-residue protein sequence, read N- to C-terminus: Adenylosuccinate synthetase (427 aa).

GTP-binding positions include 12 to 18 and 40 to 42; these read GDEGKGK and GHT. Asp13 acts as the Proton acceptor in catalysis. Positions 13 and 40 each coordinate Mg(2+). IMP is bound by residues 13–16, 38–41, Thr127, Arg141, Gln222, Thr237, and Arg301; these read DEGK and NAGH. The active-site Proton donor is the His41. Position 297 to 303 (297 to 303) interacts with substrate; that stretch reads VVTKRPR. GTP is bound by residues Arg303, 329–331, and 411–413; these read SLD and AVG.

This sequence belongs to the adenylosuccinate synthetase family. In terms of assembly, homodimer. Mg(2+) serves as cofactor.

The protein localises to the cytoplasm. The enzyme catalyses IMP + L-aspartate + GTP = N(6)-(1,2-dicarboxyethyl)-AMP + GDP + phosphate + 2 H(+). It participates in purine metabolism; AMP biosynthesis via de novo pathway; AMP from IMP: step 1/2. Its function is as follows. Plays an important role in the de novo pathway of purine nucleotide biosynthesis. Catalyzes the first committed step in the biosynthesis of AMP from IMP. This Leuconostoc citreum (strain KM20) protein is Adenylosuccinate synthetase.